The sequence spans 231 residues: Probable septum site-determining protein MinC (231 aa).

The protein belongs to the MinC family. In terms of assembly, interacts with MinD and FtsZ.

Its function is as follows. Cell division inhibitor that blocks the formation of polar Z ring septums. Rapidly oscillates between the poles of the cell to destabilize FtsZ filaments that have formed before they mature into polar Z rings. Prevents FtsZ polymerization. This is Probable septum site-determining protein MinC from Baumannia cicadellinicola subsp. Homalodisca coagulata.